The sequence spans 790 residues: Endonuclease MutS2 (790 aa).

334-341 (GPNTGGKT) provides a ligand contact to ATP. The 76-residue stretch at 713 to 788 (LDVRGMTLDD…GDGVTIVELH (76 aa)) folds into the Smr domain.

It belongs to the DNA mismatch repair MutS family. MutS2 subfamily. As to quaternary structure, homodimer. Binds to stalled ribosomes, contacting rRNA.

Endonuclease that is involved in the suppression of homologous recombination and thus may have a key role in the control of bacterial genetic diversity. Functionally, acts as a ribosome collision sensor, splitting the ribosome into its 2 subunits. Detects stalled/collided 70S ribosomes which it binds and splits by an ATP-hydrolysis driven conformational change. Acts upstream of the ribosome quality control system (RQC), a ribosome-associated complex that mediates the extraction of incompletely synthesized nascent chains from stalled ribosomes and their subsequent degradation. Probably generates substrates for RQC. In Caldanaerobacter subterraneus subsp. tengcongensis (strain DSM 15242 / JCM 11007 / NBRC 100824 / MB4) (Thermoanaerobacter tengcongensis), this protein is Endonuclease MutS2.